The chain runs to 240 residues: 4-hydroxy-tetrahydrodipicolinate reductase (240 aa).

NAD(+) contacts are provided by residues 79-81 and 103-106; these read ATT and SANM. The active-site Proton donor/acceptor is histidine 135. Position 136 (histidine 136) interacts with (S)-2,3,4,5-tetrahydrodipicolinate. The active-site Proton donor is the lysine 139. 145–146 serves as a coordination point for (S)-2,3,4,5-tetrahydrodipicolinate; sequence GT.

Belongs to the DapB family.

It is found in the cytoplasm. The enzyme catalyses (S)-2,3,4,5-tetrahydrodipicolinate + NAD(+) + H2O = (2S,4S)-4-hydroxy-2,3,4,5-tetrahydrodipicolinate + NADH + H(+). It catalyses the reaction (S)-2,3,4,5-tetrahydrodipicolinate + NADP(+) + H2O = (2S,4S)-4-hydroxy-2,3,4,5-tetrahydrodipicolinate + NADPH + H(+). Its pathway is amino-acid biosynthesis; L-lysine biosynthesis via DAP pathway; (S)-tetrahydrodipicolinate from L-aspartate: step 4/4. Its function is as follows. Catalyzes the conversion of 4-hydroxy-tetrahydrodipicolinate (HTPA) to tetrahydrodipicolinate. The polypeptide is 4-hydroxy-tetrahydrodipicolinate reductase (Staphylococcus aureus (strain JH1)).